We begin with the raw amino-acid sequence, 39 residues long: Photosystem I reaction center subunit IX (39 aa).

The chain crosses the membrane as a helical span at residues 7 to 27; that stretch reads FLTTAPVAFILFSSFVFALFI.

This sequence belongs to the PsaJ family.

The protein localises to the cellular thylakoid membrane. Its function is as follows. May help in the organization of the PsaE and PsaF subunits. The sequence is that of Photosystem I reaction center subunit IX from Synechococcus sp. (strain JA-2-3B'a(2-13)) (Cyanobacteria bacterium Yellowstone B-Prime).